The sequence spans 337 residues: Phenylalanine--tRNA ligase alpha subunit (337 aa).

E252 provides a ligand contact to Mg(2+).

Belongs to the class-II aminoacyl-tRNA synthetase family. Phe-tRNA synthetase alpha subunit type 1 subfamily. As to quaternary structure, tetramer of two alpha and two beta subunits. Requires Mg(2+) as cofactor.

The protein resides in the cytoplasm. It catalyses the reaction tRNA(Phe) + L-phenylalanine + ATP = L-phenylalanyl-tRNA(Phe) + AMP + diphosphate + H(+). The protein is Phenylalanine--tRNA ligase alpha subunit of Saccharophagus degradans (strain 2-40 / ATCC 43961 / DSM 17024).